A 505-amino-acid chain; its full sequence is Maturase K (505 aa).

This sequence belongs to the intron maturase 2 family. MatK subfamily.

Its subcellular location is the plastid. It localises to the chloroplast. In terms of biological role, usually encoded in the trnK tRNA gene intron. Probably assists in splicing its own and other chloroplast group II introns. This Micranthes integrifolia (Wholeleaf saxifrage) protein is Maturase K.